Reading from the N-terminus, the 344-residue chain is Tryptophan--tRNA ligase (344 aa).

ATP-binding positions include 20–22 (QPS) and 28–29 (GN). The 'HIGH' region motif lies at 21-29 (PSGALHLGN). Asp144 serves as a coordination point for L-tryptophan. Residues 156-158 (GED), Val197, and 206-210 (KMSKS) each bind ATP. The short motif at 206 to 210 (KMSKS) is the 'KMSKS' region element.

It belongs to the class-I aminoacyl-tRNA synthetase family. As to quaternary structure, homodimer.

It localises to the cytoplasm. It catalyses the reaction tRNA(Trp) + L-tryptophan + ATP = L-tryptophyl-tRNA(Trp) + AMP + diphosphate + H(+). Its function is as follows. Catalyzes the attachment of tryptophan to tRNA(Trp). The chain is Tryptophan--tRNA ligase from Caulobacter vibrioides (strain ATCC 19089 / CIP 103742 / CB 15) (Caulobacter crescentus).